A 367-amino-acid polypeptide reads, in one-letter code: UDP-N-acetylglucosamine--N-acetylmuramyl-(pentapeptide) pyrophosphoryl-undecaprenol N-acetylglucosamine transferase (367 aa).

UDP-N-acetyl-alpha-D-glucosamine-binding positions include 10-12, asparagine 124, serine 196, and glutamine 300; that span reads TGG.

This sequence belongs to the glycosyltransferase 28 family. MurG subfamily.

It localises to the cell membrane. The enzyme catalyses di-trans,octa-cis-undecaprenyl diphospho-N-acetyl-alpha-D-muramoyl-L-alanyl-D-glutamyl-meso-2,6-diaminopimeloyl-D-alanyl-D-alanine + UDP-N-acetyl-alpha-D-glucosamine = di-trans,octa-cis-undecaprenyl diphospho-[N-acetyl-alpha-D-glucosaminyl-(1-&gt;4)]-N-acetyl-alpha-D-muramoyl-L-alanyl-D-glutamyl-meso-2,6-diaminopimeloyl-D-alanyl-D-alanine + UDP + H(+). It participates in cell wall biogenesis; peptidoglycan biosynthesis. Its function is as follows. Cell wall formation. Catalyzes the transfer of a GlcNAc subunit on undecaprenyl-pyrophosphoryl-MurNAc-pentapeptide (lipid intermediate I) to form undecaprenyl-pyrophosphoryl-MurNAc-(pentapeptide)GlcNAc (lipid intermediate II). The sequence is that of UDP-N-acetylglucosamine--N-acetylmuramyl-(pentapeptide) pyrophosphoryl-undecaprenol N-acetylglucosamine transferase from Natranaerobius thermophilus (strain ATCC BAA-1301 / DSM 18059 / JW/NM-WN-LF).